The following is a 381-amino-acid chain: Cytochrome b (381 aa).

Helical transmembrane passes span 34–54, 78–99, 114–134, and 179–199; these read FGSL…FLAM, WLIR…YLHI, WNIG…GYVL, and FFAF…IHLL. Residues His-84 and His-98 each contribute to the heme b site. Residues His-183 and His-197 each coordinate heme b. Position 202 (His-202) interacts with a ubiquinone. Transmembrane regions (helical) follow at residues 227-247, 289-309, 321-341, and 348-368; these read YKDL…ALFL, LGGV…PMLH, MTQF…WIGG, and FILV…IIIP.

Belongs to the cytochrome b family. As to quaternary structure, the cytochrome bc1 complex contains 3 respiratory subunits (MT-CYB, CYC1 and UQCRFS1), 2 core proteins (UQCRC1 and UQCRC2) and probably 6 low-molecular weight proteins. Heme b is required as a cofactor.

The protein resides in the mitochondrion inner membrane. Component of the ubiquinol-cytochrome c reductase complex (complex III or cytochrome b-c1 complex) that is part of the mitochondrial respiratory chain. The b-c1 complex mediates electron transfer from ubiquinol to cytochrome c. Contributes to the generation of a proton gradient across the mitochondrial membrane that is then used for ATP synthesis. In Squalus acanthias (Spiny dogfish), this protein is Cytochrome b (mt-cyb).